The following is a 56-amino-acid chain: Sex-specific storage protein 1 (56 aa).

The protein belongs to the hemocyanin family. In terms of tissue distribution, expressed in fat body and ovary.

Its subcellular location is the secreted. Functionally, larval storage protein (LSP) which may serve as a store of amino acids for synthesis of adult proteins. The biosynthesis, accumulation and sequestration of storage protein-1 takes place during metamorphosis and saves energy for the non-feeding pupal stage. May also be essential for egg formation. The polypeptide is Sex-specific storage protein 1 (Amsacta albistriga (Red hairy caterpillar)).